The primary structure comprises 65 residues: Hainantoxin-X.3 (65 aa).

Residues 1–20 (MNMKILVLVAVLCLVVSTHA) form the signal peptide. Positions 21-37 (ERHSKTDMGDSPMIQER) are excised as a propeptide. Disulfide bonds link C39/C56, C46/C59, and C55/C64.

This sequence belongs to the neurotoxin 36 family. 02 subfamily. As to expression, expressed by the venom gland.

The protein localises to the secreted. Functionally, reversibly blocks N-type calcium channels (Cav2.2/CACNA1B) in rat dorsal root ganglion cells. Elicits no toxic symptoms in either vertebrates or invertebrates during a period of 48 hours post-injection, when it was assayed in vivo by direct injection into mice and cockroaches. This chain is Hainantoxin-X.3, found in Cyriopagopus hainanus (Chinese bird spider).